The following is a 265-amino-acid chain: 4-hydroxy-tetrahydrodipicolinate reductase (265 aa).

Position 16-21 (16-21 (GANGKM)) interacts with NAD(+). Arginine 43 contacts NADP(+). NAD(+) contacts are provided by residues 106-108 (GTT) and 130-133 (SENF). Histidine 164 (proton donor/acceptor) is an active-site residue. Histidine 165 provides a ligand contact to (S)-2,3,4,5-tetrahydrodipicolinate. Lysine 168 (proton donor) is an active-site residue. 174–175 (AT) contributes to the (S)-2,3,4,5-tetrahydrodipicolinate binding site.

The protein belongs to the DapB family. In terms of assembly, homotetramer.

Its subcellular location is the cytoplasm. The catalysed reaction is (S)-2,3,4,5-tetrahydrodipicolinate + NAD(+) + H2O = (2S,4S)-4-hydroxy-2,3,4,5-tetrahydrodipicolinate + NADH + H(+). The enzyme catalyses (S)-2,3,4,5-tetrahydrodipicolinate + NADP(+) + H2O = (2S,4S)-4-hydroxy-2,3,4,5-tetrahydrodipicolinate + NADPH + H(+). It participates in amino-acid biosynthesis; L-lysine biosynthesis via DAP pathway; (S)-tetrahydrodipicolinate from L-aspartate: step 4/4. Functionally, catalyzes the conversion of 4-hydroxy-tetrahydrodipicolinate (HTPA) to tetrahydrodipicolinate. The chain is 4-hydroxy-tetrahydrodipicolinate reductase from Wigglesworthia glossinidia brevipalpis.